A 194-amino-acid chain; its full sequence is Peptidyl-tRNA hydrolase (194 aa).

Tyrosine 17 lines the tRNA pocket. Catalysis depends on histidine 22, which acts as the Proton acceptor. TRNA is bound by residues phenylalanine 68, asparagine 70, and asparagine 116.

The protein belongs to the PTH family. In terms of assembly, monomer.

It localises to the cytoplasm. It carries out the reaction an N-acyl-L-alpha-aminoacyl-tRNA + H2O = an N-acyl-L-amino acid + a tRNA + H(+). Its function is as follows. Hydrolyzes ribosome-free peptidyl-tRNAs (with 1 or more amino acids incorporated), which drop off the ribosome during protein synthesis, or as a result of ribosome stalling. Functionally, catalyzes the release of premature peptidyl moieties from peptidyl-tRNA molecules trapped in stalled 50S ribosomal subunits, and thus maintains levels of free tRNAs and 50S ribosomes. In Actinobacillus pleuropneumoniae serotype 7 (strain AP76), this protein is Peptidyl-tRNA hydrolase.